Consider the following 188-residue polypeptide: UPF0461 protein C5orf24 homolog (188 aa).

S37 carries the post-translational modification Phosphoserine. K75 participates in a covalent cross-link: Glycyl lysine isopeptide (Lys-Gly) (interchain with G-Cter in SUMO2). Basic residues predominate over residues 80–92 (KKKNLNRSGKRGR). A disordered region spans residues 80-141 (KKKNLNRSGK…AGYKVSPGRP (62 aa)). The segment covering 94–107 (SGTTKSAGYRTSTG) has biased composition (polar residues). Residues S121 and S180 each carry the phosphoserine modification. A Glycyl lysine isopeptide (Lys-Gly) (interchain with G-Cter in SUMO2) cross-link involves residue K184.

It belongs to the UPF0461 family.

This Mus musculus (Mouse) protein is UPF0461 protein C5orf24 homolog.